Consider the following 70-residue polypeptide: DNA-directed RNA polymerase subunit epsilon (70 aa).

It belongs to the RNA polymerase subunit epsilon family. In terms of assembly, RNAP is composed of a core of 2 alpha, a beta and a beta' subunit. The core is associated with a delta subunit, and at least one of epsilon or omega. When a sigma factor is associated with the core the holoenzyme is formed, which can initiate transcription.

It carries out the reaction RNA(n) + a ribonucleoside 5'-triphosphate = RNA(n+1) + diphosphate. Functionally, a non-essential component of RNA polymerase (RNAP). This chain is DNA-directed RNA polymerase subunit epsilon, found in Lacticaseibacillus casei (strain BL23) (Lactobacillus casei).